Here is a 280-residue protein sequence, read N- to C-terminus: 4-diphosphocytidyl-2-C-methyl-D-erythritol kinase (280 aa).

Lys-8 is a catalytic residue. 91 to 101 lines the ATP pocket; sequence PVSAGLAGGST. Asp-133 is a catalytic residue.

This sequence belongs to the GHMP kinase family. IspE subfamily.

The catalysed reaction is 4-CDP-2-C-methyl-D-erythritol + ATP = 4-CDP-2-C-methyl-D-erythritol 2-phosphate + ADP + H(+). The protein operates within isoprenoid biosynthesis; isopentenyl diphosphate biosynthesis via DXP pathway; isopentenyl diphosphate from 1-deoxy-D-xylulose 5-phosphate: step 3/6. Its function is as follows. Catalyzes the phosphorylation of the position 2 hydroxy group of 4-diphosphocytidyl-2C-methyl-D-erythritol. This is 4-diphosphocytidyl-2-C-methyl-D-erythritol kinase from Clostridium beijerinckii (strain ATCC 51743 / NCIMB 8052) (Clostridium acetobutylicum).